Here is a 461-residue protein sequence, read N- to C-terminus: Elongation factor 1-alpha, oocyte form (461 aa).

At G2 the chain carries N,N,N-trimethylglycine. One can recognise a tr-type G domain in the interval 5–242 (KIHINIVVIG…DCIIPPQRPT (238 aa)). The tract at residues 14 to 21 (GHVDSGKS) is G1. Position 14–21 (14–21 (GHVDSGKS)) interacts with GTP. The G2 stretch occupies residues 70–74 (GITID). The tract at residues 91–94 (DAPG) is G3. Residues 91 to 95 (DAPGH) and 153 to 156 (NKMD) each bind GTP. The G4 stretch occupies residues 153–156 (NKMD). The tract at residues 194 to 196 (SGW) is G5. Residues E301 and E374 each carry the 5-glutamyl glycerylphosphorylethanolamine modification.

This sequence belongs to the TRAFAC class translation factor GTPase superfamily. Classic translation factor GTPase family. EF-Tu/EF-1A subfamily. In terms of tissue distribution, oocyte.

Its subcellular location is the cytoplasm. This protein promotes the GTP-dependent binding of aminoacyl-tRNA to the A-site of ribosomes during protein biosynthesis. The chain is Elongation factor 1-alpha, oocyte form from Xenopus laevis (African clawed frog).